The sequence spans 494 residues: Protein transport protein Sec61 subunit alpha (494 aa).

Transmembrane regions (helical) follow at residues 36-56, 79-99, 122-142, 147-167, 177-197, 249-269, 294-314, 359-379, 426-446, and 450-470; these read LWTS…LYGI, LMEL…LLAG, LLGI…GMYG, LGAG…IIVI, YGIG…SIVW, LLAT…QVEL, MPII…QILY, IVSD…SCAL, AAFG…MGAI, and TGIL…LLAV.

Belongs to the SecY/SEC61-alpha family. As to quaternary structure, heterotrimeric complex composed of SEC61-alpha, SEC61-beta and SEC61-gamma.

The protein localises to the endoplasmic reticulum membrane. Functionally, appears to play a crucial role in the insertion of secretory and membrane polypeptides into the ER. It is required for assembly of membrane and secretory proteins. This is Protein transport protein Sec61 subunit alpha from Pyrenomonas salina.